Reading from the N-terminus, the 65-residue chain is Potassium channel toxin kappa-KTx 2.7 (65 aa).

An N-terminal signal peptide occupies residues 1-26; it reads MKTSGTVYVFLLLLAFGIFTDISSAC. The propeptide occupies 27–39; the sequence is SEQMDDEDSYEVE. Disulfide bonds link cysteine 45–cysteine 63 and cysteine 49–cysteine 59.

This sequence belongs to the short scorpion toxin superfamily. Potassium channel inhibitor kappa-KTx family. Kappa-KTx 2 subfamily. Expressed by the venom gland.

The protein resides in the secreted. Its function is as follows. Weakly inhibits the Kv7.1/KCNQ1 channel (10 uM of the toxin inhibits currents by 17.8%). In Heterometrus petersii (Asian forest scorpion), this protein is Potassium channel toxin kappa-KTx 2.7.